Here is a 208-residue protein sequence, read N- to C-terminus: Attacin-A (208 aa).

The N-terminal stretch at 1–20 (MQSFKICFFISCLSVVLVKG) is a signal peptide. The propeptide occupies 21-47 (QFGGTVSSNPNGGLDVNARLSKTIGDP).

In terms of tissue distribution, hemolymph and fat body.

The protein localises to the secreted. In terms of biological role, hemolymph antibacterial protein against Gram-negative bacteria. The polypeptide is Attacin-A (Glossina morsitans morsitans (Savannah tsetse fly)).